A 141-amino-acid polypeptide reads, in one-letter code: Lutropin subunit beta (141 aa).

A signal peptide spans 1–20 (MEMLQGLLLWLLLSVAGVWA). Position 21 is a blocked amino end (Ser) (Ser-21). Cystine bridges form between Cys-29–Cys-77, Cys-43–Cys-92, Cys-46–Cys-130, Cys-54–Cys-108, Cys-58–Cys-110, and Cys-113–Cys-120. N-linked (GlcNAc...) asparagine glycosylation is present at Asn-33.

The protein belongs to the glycoprotein hormones subunit beta family. Heterodimer of a common alpha chain and a unique beta chain which confers biological specificity to thyrotropin, lutropin, follitropin and gonadotropin.

Its subcellular location is the secreted. Its function is as follows. Promotes spermatogenesis and ovulation by stimulating the testes and ovaries to synthesize steroids. This Sus scrofa (Pig) protein is Lutropin subunit beta (LHB).